The primary structure comprises 239 residues: Chaperone protein PapD (239 aa).

The N-terminal stretch at 1–21 is a signal peptide; that stretch reads MIRKKILMAAIPLFVISGADA. Cysteine 228 and cysteine 233 form a disulfide bridge.

The protein belongs to the periplasmic pilus chaperone family. Interacts with substrates PapG and PapK.

It is found in the periplasm. Functionally, binds and caps interactive surfaces on P pilus subunits to prevent them from participating in non-productive interactions. Facilitates the import of P pilus subunits into the periplasm, probably also facilitates their folding. Chaperone-subunit complexes are then targeted to the PapC outer membrane usher where the chaperone must uncap from the subunits. Coexpression of this chaperone with individual, otherwise toxic, P pilus subunits (tested with PapA, PapE and PapG) suppresses their growth inhibitory phenotype. This chain is Chaperone protein PapD (papD), found in Escherichia coli.